The chain runs to 257 residues: Very long chain fatty acid elongase F (257 aa).

7 helical membrane-spanning segments follow: residues 10–30 (IPVV…LLFV), 55–75 (IFQI…LFVL), 98–118 (LICT…IFFV), 135–155 (FAMA…GVAF), 158–178 (CLLN…SSIS), 191–211 (ITIA…ITLA), and 221–241 (LTYG…QFYY).

Belongs to the ELO family. As to expression, highly expressed in females. Little or no expression detected in males.

It localises to the endoplasmic reticulum membrane. It catalyses the reaction a very-long-chain acyl-CoA + malonyl-CoA + H(+) = a very-long-chain 3-oxoacyl-CoA + CO2 + CoA. Its pathway is lipid metabolism; fatty acid biosynthesis. In terms of biological role, condensing enzyme that elongates saturated and monounsaturated very long chain fatty acids, to yield products up to 30 carbons in length. May also elongate diunsaturated fatty acids. Important for courtship behavior where it probably has a role in female pheromone biosynthesis. The chain is Very long chain fatty acid elongase F from Drosophila melanogaster (Fruit fly).